The chain runs to 252 residues: Anamorsin homolog (252 aa).

Residues 1-153 (MINFSNTLII…AENPDFNKSD (153 aa)) are N-terminal SAM-like domain. A linker region spans residues 153–166 (DDDNNLVSSDEEIY). The [2Fe-2S] cluster site is built by cysteine 169, cysteine 180, cysteine 183, and cysteine 185. The segment at 169 to 185 (CEDKKKVVNRVCDNCTC) is fe-S binding site A. Cysteine 215, cysteine 218, cysteine 226, and cysteine 229 together coordinate [4Fe-4S] cluster. 2 consecutive short sequence motifs (cx2C motif) follow at residues 215–218 (CGNC) and 226–229 (CGSC). Residues 215-229 (CGNCYLGDAFRCGSC) form a fe-S binding site B region.

The protein belongs to the anamorsin family. Monomer. [2Fe-2S] cluster is required as a cofactor. Requires [4Fe-4S] cluster as cofactor.

The protein resides in the cytoplasm. It is found in the mitochondrion intermembrane space. Its function is as follows. Component of the cytosolic iron-sulfur (Fe-S) protein assembly (CIA) machinery. Required for the maturation of extramitochondrial Fe-S proteins. Part of an electron transfer chain functioning in an early step of cytosolic Fe-S biogenesis, facilitating the de novo assembly of a [4Fe-4S] cluster on the cytosolic Fe-S scaffold complex. Electrons are transferred from NADPH via a FAD- and FMN-containing diflavin oxidoreductase. Together with the diflavin oxidoreductase, also required for the assembly of the diferric tyrosyl radical cofactor of ribonucleotide reductase (RNR), probably by providing electrons for reduction during radical cofactor maturation in the catalytic small subunit. The polypeptide is Anamorsin homolog (DRE2) (Plasmodium berghei (strain Anka)).